The primary structure comprises 264 residues: Probable DNA polymerase sliding clamp 2 (264 aa).

A DNA-binding region spans residues 75 to 94 (SIAQEATVGIKISNFVRILD).

Belongs to the PCNA family.

Sliding clamp subunit. Responsible for tethering the catalytic subunit of DNA polymerase to DNA during high-speed replication. In Paramecium bursaria Chlorella virus 1 (PBCV-1), this protein is Probable DNA polymerase sliding clamp 2.